Reading from the N-terminus, the 129-residue chain is Glycine cleavage system H protein (129 aa).

One can recognise a Lipoyl-binding domain in the interval 24 to 106 (TYTVGITEHA…YVGGWIFKIK (83 aa)). Position 65 is an N6-lipoyllysine (lysine 65).

This sequence belongs to the GcvH family. In terms of assembly, the glycine cleavage system is composed of four proteins: P, T, L and H. (R)-lipoate serves as cofactor.

In terms of biological role, the glycine cleavage system catalyzes the degradation of glycine. The H protein shuttles the methylamine group of glycine from the P protein to the T protein. This Salmonella paratyphi B (strain ATCC BAA-1250 / SPB7) protein is Glycine cleavage system H protein.